A 61-amino-acid polypeptide reads, in one-letter code: Large ribosomal subunit protein uL30 (61 aa).

It belongs to the universal ribosomal protein uL30 family. In terms of assembly, part of the 50S ribosomal subunit.

The protein is Large ribosomal subunit protein uL30 of Exiguobacterium sp. (strain ATCC BAA-1283 / AT1b).